A 380-amino-acid chain; its full sequence is Cytochrome b (380 aa).

4 helical membrane-spanning segments follow: residues Phe34 to Ala54, Trp78 to Ile99, Trp114 to Leu134, and Phe179 to Thr199. Residues His84 and His98 each coordinate heme b. His183 and His197 together coordinate heme b. His202 contacts a ubiquinone. The next 4 membrane-spanning stretches (helical) occupy residues Thr227–Ser247, Leu289–His309, Leu321–Ser341, and Phe348–Pro368.

It belongs to the cytochrome b family. As to quaternary structure, the cytochrome bc1 complex contains 11 subunits: 3 respiratory subunits (MT-CYB, CYC1 and UQCRFS1), 2 core proteins (UQCRC1 and UQCRC2) and 6 low-molecular weight proteins (UQCRH/QCR6, UQCRB/QCR7, UQCRQ/QCR8, UQCR10/QCR9, UQCR11/QCR10 and a cleavage product of UQCRFS1). This cytochrome bc1 complex then forms a dimer. Heme b serves as cofactor.

Its subcellular location is the mitochondrion inner membrane. In terms of biological role, component of the ubiquinol-cytochrome c reductase complex (complex III or cytochrome b-c1 complex) that is part of the mitochondrial respiratory chain. The b-c1 complex mediates electron transfer from ubiquinol to cytochrome c. Contributes to the generation of a proton gradient across the mitochondrial membrane that is then used for ATP synthesis. This Eudyptes chrysocome (Western rockhopper penguin) protein is Cytochrome b (MT-CYB).